Consider the following 946-residue polypeptide: MQRLACVLIWLFLLEEQAFEIPANEYSEFAGYSNLVELAPDKFPFVQENRRYQRSLPEESGEMTDNVDQVTLYSYKVQSTITSRMATTIIQSKLVNNSPQSQNVVFDVQIPKGAFISNFTMTVNGITFTSTIREKTVGRALYSQARAKGKTAGWVRSRTLDMENFNTEVNIPPGAKVQFELHYQEMKWRKLGSYEHKIHLQPGRLAKHLEVNVWIVELQGMRFLHVPDTFEGHFQGVPVISKGQKKSHVSFKPTVAQQRKCPNCTYTAVDGELVVMYDVNREEKVGELEVFNGYFVHFFAPENLDPIPKNILFVIDVSGSMWGIKMKQTVEAMKTILDDLRTEDQFSVVDFNHNVRTWRNDLVSATKTQITDAKRYIEKIQPSGGTNINEALLRAIFILNEASNLGMLNPDSVSLIVLVSDGDPTVGELKLSKIQKNVKQNIQDNISLFSLGIGFDVDYDFLKRLSNENRGIAQRIYGNRDTSSQLKKFYNQVSTPLLRNVQFNYPQASVTDVTQNSFHNYFGGSEIVVAGKYDPSKLAEVQSIITATSTNTELVLETLSQMDDLEDFLSKDKHADPNFTKKLWAYLTINQLLAERSLAPTAAIKRKITKTILQMSLDHHIVTPLTAMVIENEAGDERMLADSPPQDHSCCSGALYYGTKVASASIPSWASPSPTPVMAMLAVGANRLESTPPPHVIRVENDPHFIIYLPKSQKNICFNIDSEPGKILSLVSDPESGILVNGQLIGAKKAENGKLRTYFGKLGFYFQKEDMKIEISTENITLINGSSTTSLFWSDTAHLGNQRVLISVKKGKSVTLTLNKEMFFSVLLHHVWKKHPVNVDFLGIYLPPTNKFSPSAHGLLGQFMNKPNIHIFNERPGKDPEKPEASMEVKGHKLTVTRGLQKDYRTDIAFGTDVPCWFVHNSGKGFIDGHYKDYLVPQLYSFLKRP.

Residues 1–18 form the signal peptide; that stretch reads MQRLACVLIWLFLLEEQA. A propeptide spanning residues 19-54 is cleaved from the precursor; that stretch reads FEIPANEYSEFAGYSNLVELAPDKFPFVQENRRYQR. Positions 56 to 185 constitute a VIT domain; sequence LPEESGEMTD…KVQFELHYQE (130 aa). A Phosphoserine modification is found at serine 60. Residues asparagine 118 and asparagine 263 are each glycosylated (N-linked (GlcNAc...) asparagine). Glutamate 282 and glutamate 283 each carry 4-carboxyglutamate. The VWFA domain maps to 308 to 468; that stretch reads PKNILFVIDV…YDFLKRLSNE (161 aa). N-linked (GlcNAc...) asparagine glycosylation occurs at asparagine 445. Position 466 is a phosphoserine (serine 466). Residue asparagine 578 is glycosylated (N-linked (GlcNAc...) asparagine). Aspartate 702 is modified (aspartate 1-(chondroitin 4-sulfate)-ester). Positions 703-946 are excised as a propeptide; it reads PHFIIYLPKS…PQLYSFLKRP (244 aa). Serine 886 carries the post-translational modification Phosphoserine.

The protein belongs to the ITIH family. As to quaternary structure, I-alpha-I plasma protease inhibitors are assembled from one or two heavy chains (HC) and one light chain, bikunin. Inter-alpha-inhibitor (I-alpha-I) is composed of ITIH1/HC1, ITIH2/HC2 and bikunin. In terms of processing, heavy chains are linked to bikunin via chondroitin 4-sulfate esterified to the alpha-carboxyl of the C-terminal aspartate after propeptide cleavage. Phosphorylated by FAM20C in the extracellular medium.

It is found in the secreted. In terms of biological role, may act as a carrier of hyaluronan in serum or as a binding protein between hyaluronan and other matrix protein, including those on cell surfaces in tissues to regulate the localization, synthesis and degradation of hyaluronan which are essential to cells undergoing biological processes. The polypeptide is Inter-alpha-trypsin inhibitor heavy chain H2 (ITIH2) (Mesocricetus auratus (Golden hamster)).